We begin with the raw amino-acid sequence, 174 residues long: NADPH-dependent 7-cyano-7-deazaguanine reductase (174 aa).

The Thioimide intermediate role is filled by C72. D79 (proton donor) is an active-site residue. Substrate contacts are provided by residues 94–96 and 113–114; these read VES and HE.

The protein belongs to the GTP cyclohydrolase I family. QueF type 1 subfamily.

The protein localises to the cytoplasm. The catalysed reaction is 7-aminomethyl-7-carbaguanine + 2 NADP(+) = 7-cyano-7-deazaguanine + 2 NADPH + 3 H(+). Its pathway is tRNA modification; tRNA-queuosine biosynthesis. Functionally, catalyzes the NADPH-dependent reduction of 7-cyano-7-deazaguanine (preQ0) to 7-aminomethyl-7-deazaguanine (preQ1). This chain is NADPH-dependent 7-cyano-7-deazaguanine reductase, found in Synechococcus elongatus (strain ATCC 33912 / PCC 7942 / FACHB-805) (Anacystis nidulans R2).